Reading from the N-terminus, the 360-residue chain is DNA replication and repair protein RecF (360 aa).

Residue 30-37 coordinates ATP; the sequence is GQNGSGKT.

It belongs to the RecF family.

The protein localises to the cytoplasm. Its function is as follows. The RecF protein is involved in DNA metabolism; it is required for DNA replication and normal SOS inducibility. RecF binds preferentially to single-stranded, linear DNA. It also seems to bind ATP. In Shewanella sp. (strain W3-18-1), this protein is DNA replication and repair protein RecF.